A 237-amino-acid polypeptide reads, in one-letter code: NAD-dependent protein deacylase (237 aa).

In terms of domain architecture, Deacetylase sirtuin-type spans 1 to 235 (MRVAVLSGAG…PGLLERLPAL (235 aa)). Residue 8-28 (GAGISAESGVPTFRDDKNGLW) participates in NAD(+) binding. Substrate contacts are provided by Y53 and R56. 86–89 (QNVD) provides a ligand contact to NAD(+). H104 (proton acceptor) is an active-site residue. Zn(2+)-binding residues include C112, C115, C138, and C140. Residues 177–179 (GTS), 203–205 (NPE), and A221 each bind NAD(+).

This sequence belongs to the sirtuin family. Class III subfamily. Requires Zn(2+) as cofactor.

The protein localises to the cytoplasm. It carries out the reaction N(6)-acetyl-L-lysyl-[protein] + NAD(+) + H2O = 2''-O-acetyl-ADP-D-ribose + nicotinamide + L-lysyl-[protein]. The enzyme catalyses N(6)-succinyl-L-lysyl-[protein] + NAD(+) + H2O = 2''-O-succinyl-ADP-D-ribose + nicotinamide + L-lysyl-[protein]. NAD-dependent lysine deacetylase and desuccinylase that specifically removes acetyl and succinyl groups on target proteins. Modulates the activities of several proteins which are inactive in their acylated form. The sequence is that of NAD-dependent protein deacylase from Mycobacterium bovis (strain ATCC BAA-935 / AF2122/97).